The primary structure comprises 160 residues: Baculoviral IAP repeat-containing protein 5.1 (160 aa).

A BIR repeat occupies 27 to 97 (RLATFADWPF…KRSASCGFLS (71 aa)). Residue Thr-43 is modified to Phosphothreonine; by CDK1. The Zn(2+) site is built by Cys-66, Cys-69, His-86, and Cys-93.

This sequence belongs to the IAP family. Component of the CPC at least composed of survivin/birc5, incenp, cdca8/borealin and/or cdca9/dasra-A, and aurkb/aurora-B. Interacts directly with incenp (via N-terminus), and may weakly interact with aurkb (via N-terminus) to stabilize the complex. Interacts with GTP-bound ran in both the S and M phases of the cell cycle. Also found in a complex with ubiquitin-mediated signaling proteins including at least usp9x/xFAM, nploc4/npl4 and ufd1. In terms of processing, ubiquitination is required for centrosome-targeting.

Its subcellular location is the cytoplasm. The protein resides in the nucleus. The protein localises to the chromosome. It localises to the centromere. It is found in the cytoskeleton. Its subcellular location is the spindle. In terms of biological role, component of the chromosomal passenger complex (CPC), a complex that acts as a key regulator of mitosis. The CPC complex has essential functions at the centromere in ensuring correct chromosome alignment and segregation and is required for chromatin-induced microtubule stabilization and spindle assembly. Stimulates the mitotic kinase activity of aurkb/aurora-B in the CPC. Does not appear to exhibit anti-apoptotic activity. In Xenopus tropicalis (Western clawed frog), this protein is Baculoviral IAP repeat-containing protein 5.1 (birc5.1).